A 715-amino-acid polypeptide reads, in one-letter code: Lactococcin-A transport/processing ATP-binding protein LcnC (715 aa).

Residues 11–138 (QVDEMDCGCA…SEWTGISLFL (128 aa)) enclose the Peptidase C39 domain. The active site involves Cys-17. A run of 6 helical transmembrane segments spans residues 167-187 (VILN…LGSY), 197-217 (IPNA…LTYI), 237-257 (LAID…MSFF), 282-302 (TILS…ILGL), 307-327 (LFLL…IFTP), and 396-416 (AIIQ…LVIS). The 283-residue stretch at 168 to 450 (ILNIVIASFI…IINLQTKLQK (283 aa)) folds into the ABC transmembrane type-1 domain. One can recognise an ABC transporter domain in the interval 482–715 (LNMSDISYQY…NGFYEQLYHN (234 aa)). 515–522 (GMSGSGKS) is a binding site for ATP.

This sequence belongs to the ABC transporter superfamily. Bacteriocin (lactococcin) exporter (TC 3.A.1.112.3) family.

It localises to the cell membrane. Its function is as follows. Involved in the export process of the bacteriocin lactococcin A. This Lactococcus lactis subsp. lactis (Streptococcus lactis) protein is Lactococcin-A transport/processing ATP-binding protein LcnC (lcnC).